Reading from the N-terminus, the 278-residue chain is HTH-type transcriptional activator RhaS (278 aa).

One can recognise an HTH araC/xylS-type domain in the interval 174–272 (NLLLAWLEDH…NWSPRDIRQG (99 aa)). DNA-binding regions (H-T-H motif) lie at residues 191–212 (DAVA…KQKT) and 239–262 (VTDI…RREF).

In terms of assembly, binds DNA as a dimer.

It localises to the cytoplasm. Activates expression of the rhaBAD and rhaT operons. This is HTH-type transcriptional activator RhaS from Escherichia coli O45:K1 (strain S88 / ExPEC).